Consider the following 415-residue polypeptide: Putative glutamate--cysteine ligase 2 (415 aa).

The protein belongs to the glutamate--cysteine ligase type 2 family. YbdK subfamily.

The catalysed reaction is L-cysteine + L-glutamate + ATP = gamma-L-glutamyl-L-cysteine + ADP + phosphate + H(+). ATP-dependent carboxylate-amine ligase which exhibits weak glutamate--cysteine ligase activity. This Bordetella petrii (strain ATCC BAA-461 / DSM 12804 / CCUG 43448) protein is Putative glutamate--cysteine ligase 2.